The primary structure comprises 601 residues: Glutamyl-tRNA(Gln) amidotransferase subunit B, mitochondrial (601 aa).

Residues 1-52 (MLQQWLRQSPRAARVLRGSCCRGPQSGSLRHSPLPTAPHRCIRSLQTSATES) constitute a mitochondrion transit peptide.

This sequence belongs to the GatB/GatE family. GatB subfamily. Subunit of the heterotrimeric GatCAB amidotransferase (AdT) complex, composed of A, B and C subunits.

The protein resides in the mitochondrion. The catalysed reaction is L-glutamyl-tRNA(Gln) + L-glutamine + ATP + H2O = L-glutaminyl-tRNA(Gln) + L-glutamate + ADP + phosphate + H(+). Its function is as follows. Allows the formation of correctly charged Gln-tRNA(Gln) through the transamidation of misacylated Glu-tRNA(Gln) in the mitochondria. The reaction takes place in the presence of glutamine and ATP through an activated gamma-phospho-Glu-tRNA(Gln). This Aspergillus fumigatus (strain ATCC MYA-4609 / CBS 101355 / FGSC A1100 / Af293) (Neosartorya fumigata) protein is Glutamyl-tRNA(Gln) amidotransferase subunit B, mitochondrial.